Here is a 316-residue protein sequence, read N- to C-terminus: Aspartate carbamoyltransferase catalytic subunit (316 aa).

Residues arginine 58 and threonine 59 each contribute to the carbamoyl phosphate site. Lysine 86 contacts L-aspartate. Carbamoyl phosphate-binding residues include arginine 108, histidine 136, and glutamine 139. Positions 169 and 223 each coordinate L-aspartate. The carbamoyl phosphate site is built by glycine 265 and proline 266.

This sequence belongs to the aspartate/ornithine carbamoyltransferase superfamily. ATCase family. In terms of assembly, heterododecamer (2C3:3R2) of six catalytic PyrB chains organized as two trimers (C3), and six regulatory PyrI chains organized as three dimers (R2).

The enzyme catalyses carbamoyl phosphate + L-aspartate = N-carbamoyl-L-aspartate + phosphate + H(+). It functions in the pathway pyrimidine metabolism; UMP biosynthesis via de novo pathway; (S)-dihydroorotate from bicarbonate: step 2/3. Its function is as follows. Catalyzes the condensation of carbamoyl phosphate and aspartate to form carbamoyl aspartate and inorganic phosphate, the committed step in the de novo pyrimidine nucleotide biosynthesis pathway. The protein is Aspartate carbamoyltransferase catalytic subunit of Anaeromyxobacter sp. (strain Fw109-5).